The following is a 414-amino-acid chain: MTQANLSETLFKPRFKHPETSTLVRRFSHGAQPPVQSALDGKTIPHWYRMINRLMWIWRGIDPREILDVQARIVMSDAERTDDDLYDTVIGYRGGNWIYEWATQAMVWQQKACAEEDPQLSGRHWLHAATLYNIAAYPHLKGDDLAEQAQALSNRAYEEAAQRLPGTMRQMEFTVPGGAPITGFLHMPKGDGPFPTVLMCGGLDAMQTDYYSLYERYFAPRGIAMLTIDMPSVGFSSKWKLTQDSSLLHQHVLKALPNVPWVDHTRVAAFGFRFGANVAVRLAYLESPRLKAVACLGPVVHTLLSDFKCQQQVPEMYLDVLASRLGMHDASDEALRVELNRYSLKVQGLLGRRCPTPMLSGYWKNDPFSPEEDSRLITSSSADGKLLEIPFNPVYRNFDKGLQEITDWIEKRLC.

It belongs to the FrsA family.

The catalysed reaction is a carboxylic ester + H2O = an alcohol + a carboxylate + H(+). Catalyzes the hydrolysis of esters. This chain is Esterase FrsA, found in Escherichia coli O45:K1 (strain S88 / ExPEC).